A 704-amino-acid polypeptide reads, in one-letter code: Polyribonucleotide nucleotidyltransferase (704 aa).

Residues aspartate 485 and aspartate 491 each coordinate Mg(2+). The KH domain occupies 552–611 (PKILTMTINPDKIRDVIGPSGKMINKIIEDTGVKIDIEQDGTIYISSADTNMNNKAREII). The S1 motif domain maps to 621 to 689 (GQMYLGTVKR…NQGRVNLSRK (69 aa)).

Belongs to the polyribonucleotide nucleotidyltransferase family. Requires Mg(2+) as cofactor.

It localises to the cytoplasm. The catalysed reaction is RNA(n+1) + phosphate = RNA(n) + a ribonucleoside 5'-diphosphate. In terms of biological role, involved in mRNA degradation. Catalyzes the phosphorolysis of single-stranded polyribonucleotides processively in the 3'- to 5'-direction. The chain is Polyribonucleotide nucleotidyltransferase from Halalkalibacterium halodurans (strain ATCC BAA-125 / DSM 18197 / FERM 7344 / JCM 9153 / C-125) (Bacillus halodurans).